The primary structure comprises 331 residues: MSTKEKLISHVMKEEPVGSRNKVTVVGVGMVGMASAISILLKDLCDELAMVDVMEDKLKGEVMDLQHGSLFLKTKIVGDKDYSVTANSKVVVVTAGARQQEGESRLNLVQRNVNIFKFIIPNIVKYSPNCILMVVSNPVDILTYVAWKLSGFPRHRVIGSGTNLDSARFRHLIGEKLHLHPSSCHAWIVGEHGDSSVPVWSGVNVAGVSLQGLNPQMGTEGDGENWKAIHKEVVDGAYEVIKLKGYTSWAIGMSVADLVESIIKNMHKVHPVSTLVQGMHGVKDEVFLSVPCVLGNSGLTDVIHMTLKAEEEKQVQKSAETLWGVQKELTL.

NAD(+)-binding positions include 29–57 (GMVG…MEDK) and arginine 98. Substrate-binding residues include arginine 105, asparagine 137, and arginine 168. An NAD(+)-binding site is contributed by asparagine 137. Histidine 192 (proton acceptor) is an active-site residue. Residue threonine 247 coordinates substrate.

This sequence belongs to the LDH/MDH superfamily. LDH family. In terms of assembly, homotetramer.

It is found in the cytoplasm. It carries out the reaction (S)-lactate + NAD(+) = pyruvate + NADH + H(+). Its pathway is fermentation; pyruvate fermentation to lactate; (S)-lactate from pyruvate: step 1/1. Its function is as follows. Interconverts simultaneously and stereospecifically pyruvate and lactate with concomitant interconversion of NADH and NAD(+). The polypeptide is L-lactate dehydrogenase A chain (ldha) (Notothenia angustata (Rockcod)).